Consider the following 245-residue polypeptide: tRNA (guanine-N(7)-)-methyltransferase (245 aa).

The S-adenosyl-L-methionine site is built by Glu71, Glu96, Asp123, and Asp146. Asp146 is a catalytic residue. Lys150 lines the substrate pocket. The segment at 152–157 is interaction with RNA; it reads KHNKRR. Substrate-binding positions include Asp182 and 224 to 227; that span reads TKFE.

Belongs to the class I-like SAM-binding methyltransferase superfamily. TrmB family.

The enzyme catalyses guanosine(46) in tRNA + S-adenosyl-L-methionine = N(7)-methylguanosine(46) in tRNA + S-adenosyl-L-homocysteine. It functions in the pathway tRNA modification; N(7)-methylguanine-tRNA biosynthesis. Functionally, catalyzes the formation of N(7)-methylguanine at position 46 (m7G46) in tRNA. This chain is tRNA (guanine-N(7)-)-methyltransferase, found in Albidiferax ferrireducens (strain ATCC BAA-621 / DSM 15236 / T118) (Rhodoferax ferrireducens).